A 77-amino-acid chain; its full sequence is U3-theraphotoxin-Hhn1k (77 aa).

The N-terminal stretch at 1–14 (TFAGLVLLFVVCYA) is a signal peptide. The propeptide occupies 15 to 42 (SESEEKEFPKEMLSSIFAVDNDFKQEER). 2 disulfides stabilise this stretch: Cys44–Cys57 and Cys56–Cys69.

The protein belongs to the neurotoxin 10 (Hwtx-1) family. 51 (Hntx-8) subfamily. Hntx-8 sub-subfamily. As to expression, expressed by the venom gland.

It is found in the secreted. Functionally, ion channel inhibitor. This is U3-theraphotoxin-Hhn1k from Cyriopagopus hainanus (Chinese bird spider).